The sequence spans 160 residues: Tumor suppressor ARF (160 aa).

The segment at 1–63 is interaction with CDK5RAP3 and MDM2; the sequence is MGRRFVVTVR…RRGPQPHPGP (63 aa). Disordered regions lie at residues 49–74 and 90–116; these read PERI…QSGS and HPLP…GRGA.

In terms of assembly, does not interact with cyclins, CDK1, CDK2, CDK4, CDK5 or CDK6. Binds to BCL6, E2F1, HUWE1, MDM2, MYC, NPM1/B23, TOP1/TOPOI and UBE2I/UBC9. Interacts with TBRG1 and COMMD1. Interacts with CDKN2AIP and E4F1. Interacts with CDK5RAP3 and MDM2; form a ternary complex involved in regulation of p53/TP53. Interacts with NOP53; the interaction is direct and promotes ARF nucleoplasmic relocalization and ubiquitin-mediated proteasomal degradation. Interacts with TTF1 (via the N-terminal region (NRD) and a C-terminal region); the interaction is direct and inhibits the nucleolar localization of TTF1. In terms of processing, ubiquitinated in normal cells by TRIP12 via the ubiquitin fusion degradation (UFD) pathway, a process that mediates ubiquitination at the N-terminus, regardless of the absence of lysine residues. Ubiquitination leads to its proteasomal degradation. In cancer cells, however, TRIP12 is located in a different cell compartment, preventing ubiquitination and degradation. Widely expressed with very low levels in kidney and colon.

It is found in the nucleus. The protein resides in the nucleolus. Its subcellular location is the nucleoplasm. Its function is as follows. Capable of inducing cell cycle arrest in G1 and G2 phases. Acts as a tumor suppressor. Binds to MDM2 and blocks its nucleocytoplasmic shuttling by sequestering it in the nucleolus. This inhibits the oncogenic action of MDM2 by blocking MDM2-induced degradation of p53 and enhancing p53-dependent transactivation and apoptosis. Also induces G2 arrest and apoptosis in a p53-independent manner by preventing the activation of cyclin B1/CDC2 complexes. Binds to BCL6 and down-regulates BCL6-induced transcriptional repression. Binds to E2F1 and MYC and blocks their transcriptional activator activity but has no effect on MYC transcriptional repression. Binds to TOP1/TOPOI and stimulates its activity. This complex binds to rRNA gene promoters and may play a role in rRNA transcription and/or maturation. Interacts with NPM1/B23 and promotes its polyubiquitination and degradation, thus inhibiting rRNA processing. Plays a role in inhibiting ribosome biogenesis, perhaps by binding to the nucleolar localization sequence of transcription termination factor TTF1, and thereby preventing nucleolar localization of TTF1. Interacts with COMMD1 and promotes its 'Lys63'-linked polyubiquitination. Interacts with UBE2I/UBC9 and enhances sumoylation of a number of its binding partners including MDM2 and E2F1. Binds to HUWE1 and represses its ubiquitin ligase activity. May play a role in controlling cell proliferation and apoptosis during mammary gland development. The protein is Tumor suppressor ARF of Rattus norvegicus (Rat).